The chain runs to 176 residues: NAD(P)H-quinone oxidoreductase subunit J (176 aa).

2 stretches are compositionally biased toward polar residues: residues 1-12 (MEKDSQATSSDT) and 20-30 (ISQSLSKDGIP). Residues 1–30 (MEKDSQATSSDTSIEKEGVISQSLSKDGIP) are disordered.

This sequence belongs to the complex I 30 kDa subunit family. NDH-1 can be composed of about 15 different subunits; different subcomplexes with different compositions have been identified which probably have different functions.

It localises to the cellular thylakoid membrane. It catalyses the reaction a plastoquinone + NADH + (n+1) H(+)(in) = a plastoquinol + NAD(+) + n H(+)(out). The enzyme catalyses a plastoquinone + NADPH + (n+1) H(+)(in) = a plastoquinol + NADP(+) + n H(+)(out). Its function is as follows. NDH-1 shuttles electrons from an unknown electron donor, via FMN and iron-sulfur (Fe-S) centers, to quinones in the respiratory and/or the photosynthetic chain. The immediate electron acceptor for the enzyme in this species is believed to be plastoquinone. Couples the redox reaction to proton translocation, and thus conserves the redox energy in a proton gradient. Cyanobacterial NDH-1 also plays a role in inorganic carbon-concentration. The sequence is that of NAD(P)H-quinone oxidoreductase subunit J from Prochlorococcus marinus (strain AS9601).